A 230-amino-acid polypeptide reads, in one-letter code: DNA mismatch repair protein MutH (230 aa).

Belongs to the MutH family.

It localises to the cytoplasm. Its function is as follows. Sequence-specific endonuclease that cleaves unmethylated GATC sequences. It is involved in DNA mismatch repair. This Citrobacter koseri (strain ATCC BAA-895 / CDC 4225-83 / SGSC4696) protein is DNA mismatch repair protein MutH.